A 262-amino-acid chain; its full sequence is Fibroin light chain (262 aa).

The signal sequence occupies residues 1 to 16 (MKPIFLVLLVATSAYA). Ser19 carries the post-translational modification N-acetylserine; in short form. Cys101 and Cys160 form a disulfide bridge.

Silk fibroin elementary unit consists in a disulfide-linked heavy and light chain and a p25 glycoprotein in molar ratios of 6:6:1. This results in a complex of approximately 2.3 MDa. In terms of processing, the interchain disulfide bridge is essential for the intracellular transport and secretion of fibroin. Post-translationally, partially N-terminally processed to yield a short form which lacks the first two residues of the long form. Produced exclusively in the posterior (PSG) section of silk glands, which are essentially modified salivary glands.

It localises to the secreted. Functionally, it is likely that the major role of L-chain is to prevent the retention of H-chain in ER by forming the disulfide linkage. The polypeptide is Fibroin light chain (FIBL) (Bombyx mori (Silk moth)).